Reading from the N-terminus, the 340-residue chain is Holliday junction branch migration complex subunit RuvB (340 aa).

Positions 1–184 (MNENLDPTTK…FGISSRLQYY (184 aa)) are large ATPase domain (RuvB-L). ATP-binding positions include Leu-23, Arg-24, Gly-65, Lys-68, Thr-69, Thr-70, 131–133 (EDF), Arg-174, Tyr-184, and Arg-221. Thr-69 lines the Mg(2+) pocket. The small ATPAse domain (RuvB-S) stretch occupies residues 185-255 (STELLTTIVE…ISKYALKALN (71 aa)). The interval 258 to 340 (AHGLDEMDNK…INTNIQGGLF (83 aa)) is head domain (RuvB-H). Arg-313 and Arg-318 together coordinate DNA.

The protein belongs to the RuvB family. In terms of assembly, homohexamer. Forms an RuvA(8)-RuvB(12)-Holliday junction (HJ) complex. HJ DNA is sandwiched between 2 RuvA tetramers; dsDNA enters through RuvA and exits via RuvB. An RuvB hexamer assembles on each DNA strand where it exits the tetramer. Each RuvB hexamer is contacted by two RuvA subunits (via domain III) on 2 adjacent RuvB subunits; this complex drives branch migration. In the full resolvosome a probable DNA-RuvA(4)-RuvB(12)-RuvC(2) complex forms which resolves the HJ.

It localises to the cytoplasm. It catalyses the reaction ATP + H2O = ADP + phosphate + H(+). The RuvA-RuvB-RuvC complex processes Holliday junction (HJ) DNA during genetic recombination and DNA repair, while the RuvA-RuvB complex plays an important role in the rescue of blocked DNA replication forks via replication fork reversal (RFR). RuvA specifically binds to HJ cruciform DNA, conferring on it an open structure. The RuvB hexamer acts as an ATP-dependent pump, pulling dsDNA into and through the RuvAB complex. RuvB forms 2 homohexamers on either side of HJ DNA bound by 1 or 2 RuvA tetramers; 4 subunits per hexamer contact DNA at a time. Coordinated motions by a converter formed by DNA-disengaged RuvB subunits stimulates ATP hydrolysis and nucleotide exchange. Immobilization of the converter enables RuvB to convert the ATP-contained energy into a lever motion, pulling 2 nucleotides of DNA out of the RuvA tetramer per ATP hydrolyzed, thus driving DNA branch migration. The RuvB motors rotate together with the DNA substrate, which together with the progressing nucleotide cycle form the mechanistic basis for DNA recombination by continuous HJ branch migration. Branch migration allows RuvC to scan DNA until it finds its consensus sequence, where it cleaves and resolves cruciform DNA. In Flavobacterium johnsoniae (strain ATCC 17061 / DSM 2064 / JCM 8514 / BCRC 14874 / CCUG 350202 / NBRC 14942 / NCIMB 11054 / UW101) (Cytophaga johnsonae), this protein is Holliday junction branch migration complex subunit RuvB.